The following is a 189-amino-acid chain: uncharacterized protein (189 aa).

3 helical membrane passes run 2 to 22 (LVVVSLTPPVGVCVGLFHHLL), 93 to 113 (ILFYFYFVLILFYFIALYFIL), and 116 to 136 (FYSTILFFFPLFIKCSHLHTL).

It localises to the membrane. This is an uncharacterized protein from Schizosaccharomyces pombe (strain 972 / ATCC 24843) (Fission yeast).